The primary structure comprises 119 residues: Large ribosomal subunit protein uL18 (119 aa).

The protein belongs to the universal ribosomal protein uL18 family. Part of the 50S ribosomal subunit; part of the 5S rRNA/L5/L18/L25 subcomplex. Contacts the 5S and 23S rRNAs.

Functionally, this is one of the proteins that bind and probably mediate the attachment of the 5S RNA into the large ribosomal subunit, where it forms part of the central protuberance. This is Large ribosomal subunit protein uL18 from Micrococcus luteus (Micrococcus lysodeikticus).